Consider the following 111-residue polypeptide: UPF0145 protein BMA10229_A0446 (111 aa).

This sequence belongs to the UPF0145 family.

This chain is UPF0145 protein BMA10229_A0446, found in Burkholderia mallei (strain NCTC 10229).